The primary structure comprises 697 residues: Long-chain-fatty-acid--CoA ligase 6 (697 aa).

A helical; Signal-anchor for type III membrane protein transmembrane segment spans residues 25–45; that stretch reads LSATTLVSVGALAAVLAYWLT. At 46-697 the chain is on the cytoplasmic side; that stretch reads HRPKALQPPC…QIEELYLVSV (652 aa).

This sequence belongs to the ATP-dependent AMP-binding enzyme family. The cofactor is Mg(2+).

It localises to the mitochondrion outer membrane. The protein resides in the peroxisome membrane. It is found in the microsome membrane. Its subcellular location is the endoplasmic reticulum membrane. It carries out the reaction a long-chain fatty acid + ATP + CoA = a long-chain fatty acyl-CoA + AMP + diphosphate. The enzyme catalyses (5Z,8Z,11Z,14Z)-eicosatetraenoate + ATP + CoA = (5Z,8Z,11Z,14Z)-eicosatetraenoyl-CoA + AMP + diphosphate. It catalyses the reaction 15-hydroxy-(5Z,8Z,11Z,13E)-eicosatetraenoate + ATP + CoA = 15-hydroxy-(5Z,8Z,11Z,13E)-eicosatetraenoyl-CoA + AMP + diphosphate. The catalysed reaction is 12-hydroxy-(5Z,8Z,10E,14Z)-eicosatetraenoate + ATP + CoA = 12-hydroxy-(5Z,8Z,10E,14Z)-eicosatetraenoyl-CoA + AMP + diphosphate. It carries out the reaction 5-hydroxy-(6E,8Z,11Z,14Z)-eicosatetraenoate + ATP + CoA = 5-hydroxy-(6E,8Z,11Z,14Z)-eicosatetraenoyl-CoA + AMP + diphosphate. The enzyme catalyses hexadecanoate + ATP + CoA = hexadecanoyl-CoA + AMP + diphosphate. It catalyses the reaction (E)-hexadec-2-enoate + ATP + CoA = (2E)-hexadecenoyl-CoA + AMP + diphosphate. Functionally, catalyzes the conversion of long-chain fatty acids to their active form acyl-CoA for both synthesis of cellular lipids, and degradation via beta-oxidation. Plays an important role in fatty acid metabolism in brain and the acyl-CoAs produced may be utilized exclusively for the synthesis of the brain lipid. The polypeptide is Long-chain-fatty-acid--CoA ligase 6 (Acsl6) (Mus musculus (Mouse)).